The sequence spans 538 residues: MTEPTWKTVASEKQQQRESKIPSEWQIPKSSHPAPEVTFVQDFPAKSGMFTNRELQLTAATASDVTAKISTGEWTAVEVTTAVCKRAAVAQQLLNCVTEICFDQAIARAKELDAYFEKEGKTVGPLHGLPISFKDQFNVKGFDSTIGYCSYASKPATADSTLVKLLVKAGAIIYVKSNVPITLMMGESFNNIFGRTLNPRNRELTTGGSSGGEAALVTFCASFLGVGTDIGGSLRIPCSFTGLYGLRPSHGRVSYQHVQNTLLGQEAVRSCAGPMCRAPEDIRLFMSSLAAQQPWLWDPQSLPLPWRAEEEVLPKKLCFGFALGDGHVGPKKLKQAGHAVINFNLTEGKEVNEIMNKMFTADGGAEFQRDTDATGEPLPPTVEYWLGHSSQIKASTVSETWKNQHKKALLAQKFLEKWQATKGRTGTSRPIDGLIMPSTPFPASRHGSGWPWHFGDLSALLDLTTGVFPVTRVNLEKDAVPPSWTPMSVKDKEAMDYYEKPENHENALVGLQLIGRRLEEEKVTAMLTLIRNVLEVDY.

The tract at residues 1-32 (MTEPTWKTVASEKQQQRESKIPSEWQIPKSSH) is disordered. Catalysis depends on charge relay system residues Lys-134 and Ser-209. Ser-233 (acyl-ester intermediate) is an active-site residue.

The protein belongs to the amidase family.

The enzyme catalyses a monocarboxylic acid amide + H2O = a monocarboxylate + NH4(+). It functions in the pathway secondary metabolite biosynthesis. Its function is as follows. Putative amidase; part of the gene cluster that mediates the biosynthesis of KK-1, a novel cyclic depsipeptide with 10 residues which is a promising active compound with high activity against many plant pathogens, especially Botrytis cinerea. The role of kk1C in KK-1 biosynthesis has still to be determined. The nonribosomal peptide synthetase (NRPS) kk1B catalyzes the elongation and cyclization of the decapeptide chain composed of 1 D-lactic acid residue (D-Lac), 1 pipecolic acid residue (Pip), 1 aspartic acid residue (Asp), 1 isoleucine residue (Ile), 1 glycine residue (Gly), 1 tyrosine residue (Tyr) and 4 valine residues (Val). The Asp, Ile and 3 Val residues are N-methylated by the 5 methyltransferase domains from the NRPS (found in modules 3, 5, 6, 7 and 9), whereas the Tyr residue is O-methylated by the cluster encoded O-methyltransferase kk1A. The thioesterase kk1J is likely to be involved in the corrective mechanism of peptide chain synthesis. The D-lactate dehydrogenase kk1H is involved in the synthesis of D-lactic acid from pyruvic acid, which is recognized by the A domain of the first kk1B module. The pyrroline-5-carboxylate reductase kk1I is involved in the synthesis of the L-pipecolic acid residue of KK-1 from delta-1-pyrroline-5-carboxylate (P5C), a metabolic intermediate of lysine. It is still unclear how kk1C and kk1D are involved in the production of KK-1. The sequence is that of Putative amidase kk1C from Curvularia clavata.